The following is a 706-amino-acid chain: Termination factor NPH-I homolog (706 aa).

Residues 62–227 (IGQGENTRGL…VPCFNMLSGR (166 aa)) form the Helicase ATP-binding domain. Residue 75–82 (HQMGMGKT) participates in ATP binding. Positions 168 to 171 (DEAH) match the DEAH box motif. Positions 378 to 599 (KIVCMLKNIK…HLNSAFRDLL (222 aa)) constitute a Helicase C-terminal domain.

Belongs to the DEAD box helicase family. DEAH subfamily. As to quaternary structure, part of the viral DNA-directed RNA polymerase that consists of 8 polII-like subunits (RPB1, RPB2, RPB3, RPB5, RPB6, RPB7, RPB9, RPB10), a capping enzyme and a termination factor.

The protein localises to the virion. In terms of biological role, putative DNA-dependent ATPase required for providing the needed energy to achieve the termination of early transcripts. This is Termination factor NPH-I homolog from African swine fever virus (isolate Pig/Kenya/KEN-50/1950) (ASFV).